Consider the following 105-residue polypeptide: Cuticle protein AMP1B (105 aa).

Positions 1–21 are disordered; that stretch reads DRDAQTLTDERSDQGDGNFRY. Residues 16-81 enclose the Chitin-binding type R&amp;R domain; sequence DGNFRYEFET…PSSDLLPVPP (66 aa).

Arthrodial membrane.

This chain is Cuticle protein AMP1B, found in Homarus americanus (American lobster).